The following is a 399-amino-acid chain: tRNA-dihydrouridine(16/17) synthase [NAD(P)(+)] (399 aa).

FMN contacts are provided by residues 24 to 26 (PMV) and Q80. C109 functions as the Proton donor in the catalytic mechanism. FMN is bound by residues K148, H176, 211-213 (NGN), and 235-236 (AE).

It belongs to the Dus family. Dus1 subfamily. Requires FMN as cofactor.

It is found in the nucleus. The protein localises to the mitochondrion. It carries out the reaction 5,6-dihydrouridine(16) in tRNA + NADP(+) = uridine(16) in tRNA + NADPH + H(+). It catalyses the reaction 5,6-dihydrouridine(16) in tRNA + NAD(+) = uridine(16) in tRNA + NADH + H(+). The catalysed reaction is 5,6-dihydrouridine(17) in tRNA + NAD(+) = uridine(17) in tRNA + NADH + H(+). The enzyme catalyses 5,6-dihydrouridine(17) in tRNA + NADP(+) = uridine(17) in tRNA + NADPH + H(+). It carries out the reaction a 5,6-dihydrouridine in mRNA + NAD(+) = a uridine in mRNA + NADH + H(+). It catalyses the reaction a 5,6-dihydrouridine in mRNA + NADP(+) = a uridine in mRNA + NADPH + H(+). Functionally, catalyzes the synthesis of dihydrouridine, a modified base found in the D-loop of most tRNAs. Also able to mediate dihydrouridylation of some mRNAs, thereby affecting their translation. This chain is tRNA-dihydrouridine(16/17) synthase [NAD(P)(+)], found in Schizosaccharomyces pombe (strain 972 / ATCC 24843) (Fission yeast).